The sequence spans 94 residues: MNKTELIDGVAAAANLSKVEAGRAIDAVVNEITEALKKGDSVTLVGFGTFQVRPRAERPGRNPKSGELIMIAASNNPSFKPGKALKDAVKCSAG.

Belongs to the bacterial histone-like protein family.

In terms of biological role, histone-like DNA-binding protein which is capable of wrapping DNA to stabilize it, and thus to prevent its denaturation under extreme environmental conditions. The protein is DNA-binding protein HU (hup) of Xylella fastidiosa (strain 9a5c).